A 136-amino-acid chain; its full sequence is ATP synthase epsilon chain (136 aa).

Belongs to the ATPase epsilon chain family. F-type ATPases have 2 components, CF(1) - the catalytic core - and CF(0) - the membrane proton channel. CF(1) has five subunits: alpha(3), beta(3), gamma(1), delta(1), epsilon(1). CF(0) has three main subunits: a, b and c.

It is found in the cellular thylakoid membrane. Functionally, produces ATP from ADP in the presence of a proton gradient across the membrane. The chain is ATP synthase epsilon chain (atpC) from Prochloron didemni.